Consider the following 373-residue polypeptide: Forkhead box protein F1 (373 aa).

The tract at residues 1 to 51 (MTAEIQQPPSQPPAQSSPMSAATDKHGGQPSVMESANCATKTKKTNAGIRR) is disordered. Residues 13–22 (PAQSSPMSAA) are compositionally biased toward low complexity. Residues 54–148 (KPPYSYIALI…EEGSFRRRPR (95 aa)) constitute a DNA-binding region (fork-head). Disordered stretches follow at residues 236–255 (GSSG…LGGG) and 283–306 (QPLS…SLDQ). A compositionally biased stretch (low complexity) spans 286–306 (SPCNSAANPLSSSLSSHSLDQ).

It localises to the nucleus. Its function is as follows. Probable transcription factor. Required for smooth muscle (visceral mesoderm) differentiation during gut development. Also required for normal proliferation of the lateral plate mesoderm. Acts as a downstream mediator of bmp4-signaling. In Xenopus tropicalis (Western clawed frog), this protein is Forkhead box protein F1.